Consider the following 416-residue polypeptide: Adenylosuccinate synthetase (416 aa).

GTP contacts are provided by residues 13–19 (GDEGKGK) and 41–43 (GHT). Residue Asp-14 is the Proton acceptor of the active site. Residues Asp-14 and Gly-41 each coordinate Mg(2+). IMP is bound by residues 14–17 (DEGK), 39–42 (NAGH), Thr-126, Arg-140, Gln-220, Thr-235, and Arg-299. The active-site Proton donor is His-42. 295 to 301 (VSTGRKR) is a binding site for substrate. Residues Arg-301, 327–329 (KLD), and 405–407 (STS) contribute to the GTP site.

This sequence belongs to the adenylosuccinate synthetase family. Homodimer. Mg(2+) is required as a cofactor.

It localises to the cytoplasm. The enzyme catalyses IMP + L-aspartate + GTP = N(6)-(1,2-dicarboxyethyl)-AMP + GDP + phosphate + 2 H(+). The protein operates within purine metabolism; AMP biosynthesis via de novo pathway; AMP from IMP: step 1/2. Its function is as follows. Plays an important role in the de novo pathway of purine nucleotide biosynthesis. Catalyzes the first committed step in the biosynthesis of AMP from IMP. The chain is Adenylosuccinate synthetase from Campylobacter jejuni subsp. jejuni serotype O:2 (strain ATCC 700819 / NCTC 11168).